Reading from the N-terminus, the 218-residue chain is Cytochrome b6 (218 aa).

Residues 35–55 traverse the membrane as a helical segment; it reads IFYCLGGITLVCFLIQFATGF. Residue Cys38 coordinates heme c. Residues His89 and His103 each contribute to the heme b site. 3 helical membrane passes run 93–113, 119–139, and 189–209; these read ASMM…TGGF, LTWV…VTGY, and LHTF…FLMI. Heme b contacts are provided by His190 and His205.

It belongs to the cytochrome b family. PetB subfamily. In terms of assembly, the 4 large subunits of the cytochrome b6-f complex are cytochrome b6, subunit IV (17 kDa polypeptide, PetD), cytochrome f and the Rieske protein, while the 4 small subunits are PetG, PetL, PetM and PetN. The complex functions as a dimer. Heme b serves as cofactor. It depends on heme c as a cofactor.

It localises to the cellular thylakoid membrane. Its function is as follows. Component of the cytochrome b6-f complex, which mediates electron transfer between photosystem II (PSII) and photosystem I (PSI), cyclic electron flow around PSI, and state transitions. This Prochlorococcus marinus (strain MIT 9301) protein is Cytochrome b6.